The primary structure comprises 115 residues: Ribonuclease P protein component (115 aa).

It belongs to the RnpA family. Consists of a catalytic RNA component (M1 or rnpB) and a protein subunit.

It carries out the reaction Endonucleolytic cleavage of RNA, removing 5'-extranucleotides from tRNA precursor.. RNaseP catalyzes the removal of the 5'-leader sequence from pre-tRNA to produce the mature 5'-terminus. It can also cleave other RNA substrates such as 4.5S RNA. The protein component plays an auxiliary but essential role in vivo by binding to the 5'-leader sequence and broadening the substrate specificity of the ribozyme. This Staphylococcus carnosus (strain TM300) protein is Ribonuclease P protein component.